Reading from the N-terminus, the 341-residue chain is tRNA (cytidine(56)-2'-O)-methyltransferase (341 aa).

S-adenosyl-L-methionine is bound by residues Leu-79 and 104 to 108; that span reads GAEKV. The HD domain maps to 187 to 294; it reads IIRHVETVYK…VAHADNLVSM (108 aa).

It belongs to the aTrm56 family. Homodimer.

It localises to the cytoplasm. It catalyses the reaction cytidine(56) in tRNA + S-adenosyl-L-methionine = 2'-O-methylcytidine(56) in tRNA + S-adenosyl-L-homocysteine + H(+). Its function is as follows. Specifically catalyzes the AdoMet-dependent 2'-O-ribose methylation of cytidine at position 56 in tRNAs. This is tRNA (cytidine(56)-2'-O)-methyltransferase from Picrophilus torridus (strain ATCC 700027 / DSM 9790 / JCM 10055 / NBRC 100828 / KAW 2/3).